Here is a 437-residue protein sequence, read N- to C-terminus: GTPase Obg (437 aa).

The 159-residue stretch at 2–160 (SMFLDTAKVS…RQLELELKIL (159 aa)) folds into the Obg domain. One can recognise an OBG-type G domain in the interval 161-338 (ADVGLVGFPS…LLEATAELLA (178 aa)). GTP contacts are provided by residues 167–174 (GFPSVGKS), 192–196 (FTTIV), 214–217 (DLPG), 284–287 (NKMD), and 319–321 (SSL). Residues serine 174 and threonine 194 each contribute to the Mg(2+) site. Residues 359–437 (GFAAEEKAFE…IGKFEFEFVD (79 aa)) form the OCT domain.

The protein belongs to the TRAFAC class OBG-HflX-like GTPase superfamily. OBG GTPase family. Monomer. Requires Mg(2+) as cofactor.

The protein resides in the cytoplasm. Functionally, an essential GTPase which binds GTP, GDP and possibly (p)ppGpp with moderate affinity, with high nucleotide exchange rates and a fairly low GTP hydrolysis rate. Plays a role in control of the cell cycle, stress response, ribosome biogenesis and in those bacteria that undergo differentiation, in morphogenesis control. The polypeptide is GTPase Obg (Streptococcus equi subsp. equi (strain 4047)).